A 652-amino-acid chain; its full sequence is ATP-dependent zinc metalloprotease FtsH 2 (652 aa).

Residues 1–6 (MNKYRR) are Cytoplasmic-facing. A helical membrane pass occupies residues 7–27 (GLALGALALAVFILIGVGISM). The Extracellular segment spans residues 28 to 108 (RATPQPVNLT…PAGNGAISAD (81 aa)). A helical transmembrane segment spans residues 109–129 (LMLLLRILTIVAVGVVIFVLF). Residues 130 to 652 (RRFGPSSIGT…RAAKPQIDRT (523 aa)) lie on the Cytoplasmic side of the membrane. ATP is bound at residue 200–207 (GPPGTGKT). Residue His-420 coordinates Zn(2+). Residue Glu-421 is part of the active site. Residues His-424 and Asp-496 each coordinate Zn(2+).

In the central section; belongs to the AAA ATPase family. It in the C-terminal section; belongs to the peptidase M41 family. As to quaternary structure, homohexamer. Zn(2+) is required as a cofactor.

It localises to the cell membrane. Functionally, acts as a processive, ATP-dependent zinc metallopeptidase for both cytoplasmic and membrane proteins. Plays a role in the quality control of integral membrane proteins. The chain is ATP-dependent zinc metalloprotease FtsH 2 from Sphaerobacter thermophilus (strain ATCC 49802 / DSM 20745 / KCCM 41009 / NCIMB 13125 / S 6022).